A 351-amino-acid polypeptide reads, in one-letter code: Glycerol-3-phosphate dehydrogenase 1-like protein (351 aa).

Position 12-17 (12-17 (GSGNWG)) interacts with NAD(+). Position 122 (Lys122) interacts with substrate. Ala155 provides a ligand contact to NAD(+). Lys206 functions as the Proton acceptor in the catalytic mechanism. NAD(+) contacts are provided by Arg271, Lys298, and Gln300. 271–272 (RN) contributes to the substrate binding site.

This sequence belongs to the NAD-dependent glycerol-3-phosphate dehydrogenase family. Interacts with SCN5A.

It is found in the cytoplasm. It catalyses the reaction sn-glycerol 3-phosphate + NAD(+) = dihydroxyacetone phosphate + NADH + H(+). Functionally, plays a role in regulating cardiac sodium current; decreased enzymatic activity with resulting increased levels of glycerol 3-phosphate activating the DPD1L-dependent SCN5A phosphorylation pathway, may ultimately lead to decreased sodium current; cardiac sodium current may also be reduced due to alterations of NAD(H) balance induced by DPD1L. The sequence is that of Glycerol-3-phosphate dehydrogenase 1-like protein (Gpd1l) from Mus musculus (Mouse).